The chain runs to 359 residues: Pheromone receptor 1 (359 aa).

7 consecutive transmembrane segments (helical) span residues 5–25 (VTPF…GWHI), 33–53 (ITLS…SVAW), 71–87 (LRHA…LVIA), 110–130 (IIID…LMIV), 147–167 (FLSL…IVSF), 206–226 (LLVL…GSVS), and 268–288 (LILS…MFGL). Residues 335–359 (TSGGIDGSPHSEKFSINTPTKYEEA) form a disordered region. Residues 348–359 (FSINTPTKYEEA) are compositionally biased toward polar residues.

It belongs to the G-protein coupled receptor 4 family.

It is found in the membrane. Functionally, receptor for the A2 pheromone, a prenylated mating factor. The sequence is that of Pheromone receptor 1 (PRA1) from Ustilago hordei (Barley covered smut fungus).